The primary structure comprises 316 residues: MNQLDALKQFTTVVADTGDFKQLAQFQPQDATTNPSLILKAVQQPEYAPLLQDTVARCKGRTMDDIIDRLLVRFGCEILAIIPGRVSTEVDARLSFDTYASITRAERIIDLYQAEGIDIDRVLIKIAATWEGIKAAEKLEQRGIHTNLTLLFSFAQAVACGQARVQLISPFVGRIYDWHKKQAGAHWDEAAAAGANDPGVRSVTQIYNHYKHFGIATEVMGASFRNLGQITALAGCDLLTIAPELLARLVASAAPLQPALDAEAAKGMALPAVNYDEAGWRYALNEDAMATEKLAEGIRAFAADAVKLEQLILASG.

Lys-125 serves as the catalytic Schiff-base intermediate with substrate.

The protein belongs to the transaldolase family. Type 1 subfamily. As to quaternary structure, homodimer.

Its subcellular location is the cytoplasm. It catalyses the reaction D-sedoheptulose 7-phosphate + D-glyceraldehyde 3-phosphate = D-erythrose 4-phosphate + beta-D-fructose 6-phosphate. It functions in the pathway carbohydrate degradation; pentose phosphate pathway; D-glyceraldehyde 3-phosphate and beta-D-fructose 6-phosphate from D-ribose 5-phosphate and D-xylulose 5-phosphate (non-oxidative stage): step 2/3. In terms of biological role, transaldolase is important for the balance of metabolites in the pentose-phosphate pathway. The sequence is that of Transaldolase from Verminephrobacter eiseniae (strain EF01-2).